The primary structure comprises 513 residues: Ribonuclease Y (513 aa).

A helical transmembrane segment spans residues 3–23 (IGTLLLFTFLGLVAGATAVWL). The segment at 77–96 (LQSVESKLKSREQTLNQRQE) is disordered. Basic and acidic residues predominate over residues 82–96 (SKLKSREQTLNQRQE). The 61-residue stretch at 203-263 (SVTVFHIESD…VRREIARLAL (61 aa)) folds into the KH domain. Positions 329 to 422 (LLQHSRETAN…VQVCDAISGA (94 aa)) constitute an HD domain.

It belongs to the RNase Y family.

It localises to the cell membrane. Endoribonuclease that initiates mRNA decay. This chain is Ribonuclease Y, found in Porphyromonas gingivalis (strain ATCC BAA-308 / W83).